The chain runs to 189 residues: Interferon alpha-G (189 aa).

A signal peptide spans 1–23; the sequence is MAPAWSLLLALLLLSCNAICSLG. Intrachain disulfides connect Cys24/Cys122 and Cys52/Cys162.

The protein belongs to the alpha/beta interferon family.

It localises to the secreted. Produced by macrophages, IFN-alpha have antiviral activities. Interferon stimulates the production of two enzymes: a protein kinase and an oligoadenylate synthetase. The protein is Interferon alpha-G (IFNAG) of Bos taurus (Bovine).